The primary structure comprises 325 residues: Putative HTH-type transcriptional regulatory protein HQ_3058A (325 aa).

An HTH cro/C1-type domain is found at 132–186 (LADEREERGWSLGRLATELGVSRRTVSKYEDGMNASIEIAIQLEEVFDEPFSSPL). Residues 143–162 (LGRLATELGVSRRTVSKYED) constitute a DNA-binding region (H-T-H motif). Residues 189–211 (MEGAESVRDSEPTPDDPDPDADD) are disordered. Acidic residues predominate over residues 200-211 (PTPDDPDPDADD).

The sequence is that of Putative HTH-type transcriptional regulatory protein HQ_3058A from Haloquadratum walsbyi (strain DSM 16790 / HBSQ001).